We begin with the raw amino-acid sequence, 118 residues long: Small ribosomal subunit protein uS13 (118 aa).

A disordered region spans residues 94–118 (SLPLRGQRTKTNARTRKGPRKPIRK).

Belongs to the universal ribosomal protein uS13 family. In terms of assembly, part of the 30S ribosomal subunit. Forms a loose heterodimer with protein S19. Forms two bridges to the 50S subunit in the 70S ribosome.

Its function is as follows. Located at the top of the head of the 30S subunit, it contacts several helices of the 16S rRNA. In the 70S ribosome it contacts the 23S rRNA (bridge B1a) and protein L5 of the 50S subunit (bridge B1b), connecting the 2 subunits; these bridges are implicated in subunit movement. Contacts the tRNAs in the A and P-sites. This chain is Small ribosomal subunit protein uS13, found in Shewanella woodyi (strain ATCC 51908 / MS32).